The following is a 62-amino-acid chain: UPF0370 protein ESA_00777 (62 aa).

Residues Leu4–Ile24 form a helical membrane-spanning segment. Residues Met36–Lys51 are compositionally biased toward basic and acidic residues. The segment at Met36 to Lys62 is disordered. Residues Trp52–Lys62 are compositionally biased toward acidic residues.

Belongs to the UPF0370 family.

It localises to the cell membrane. This Cronobacter sakazakii (strain ATCC BAA-894) (Enterobacter sakazakii) protein is UPF0370 protein ESA_00777.